A 294-amino-acid chain; its full sequence is Probable 2-(5''-triphosphoribosyl)-3'-dephosphocoenzyme-A synthase (294 aa).

Belongs to the CitG/MdcB family.

It carries out the reaction 3'-dephospho-CoA + ATP = 2'-(5''-triphospho-alpha-D-ribosyl)-3'-dephospho-CoA + adenine. The protein is Probable 2-(5''-triphosphoribosyl)-3'-dephosphocoenzyme-A synthase of Streptococcus equi subsp. zooepidemicus (strain MGCS10565).